The sequence spans 23 residues: Cardioactive peptide CAP23 (23 aa).

A disulfide bridge links cysteine 7 with cysteine 19.

It belongs to the GBP/PSP1/paralytic peptide family.

Its function is as follows. Has excitatory effects on a semi-isolated heart from larval Manduca sexta, causing an inotropic effect at low concentrations of peptide and chronotropic and inotropic effects at high doses. The polypeptide is Cardioactive peptide CAP23 (Spodoptera eridania (Southern armyworm)).